A 622-amino-acid chain; its full sequence is 1-deoxy-D-xylulose-5-phosphate synthase (622 aa).

Thiamine diphosphate-binding positions include H80 and 121 to 123 (GHS). D152 is a Mg(2+) binding site. Thiamine diphosphate-binding positions include 153–154 (GA), N181, Y288, and E370. A Mg(2+)-binding site is contributed by N181.

It belongs to the transketolase family. DXPS subfamily. Homodimer. Requires Mg(2+) as cofactor. The cofactor is thiamine diphosphate.

The enzyme catalyses D-glyceraldehyde 3-phosphate + pyruvate + H(+) = 1-deoxy-D-xylulose 5-phosphate + CO2. It participates in metabolic intermediate biosynthesis; 1-deoxy-D-xylulose 5-phosphate biosynthesis; 1-deoxy-D-xylulose 5-phosphate from D-glyceraldehyde 3-phosphate and pyruvate: step 1/1. Catalyzes the acyloin condensation reaction between C atoms 2 and 3 of pyruvate and glyceraldehyde 3-phosphate to yield 1-deoxy-D-xylulose-5-phosphate (DXP). The chain is 1-deoxy-D-xylulose-5-phosphate synthase from Shewanella loihica (strain ATCC BAA-1088 / PV-4).